The following is a 239-amino-acid chain: NAD-dependent protein deacylase (239 aa).

The region spanning 1-239 (MNVLILTGAG…PKLLNHFSAM (239 aa)) is the Deacetylase sirtuin-type domain. Residue 8 to 27 (GAGISAESGIPTFRDANGLW) coordinates NAD(+). 2 residues coordinate substrate: Tyr52 and Arg55. 93–96 (QNID) is a binding site for NAD(+). His111 acts as the Proton acceptor in catalysis. NAD(+) contacts are provided by residues 182 to 184 (GTS), 207 to 209 (NLD), and Ala225.

The protein belongs to the sirtuin family. Class III subfamily.

It is found in the cytoplasm. It carries out the reaction N(6)-acetyl-L-lysyl-[protein] + NAD(+) + H2O = 2''-O-acetyl-ADP-D-ribose + nicotinamide + L-lysyl-[protein]. It catalyses the reaction N(6)-succinyl-L-lysyl-[protein] + NAD(+) + H2O = 2''-O-succinyl-ADP-D-ribose + nicotinamide + L-lysyl-[protein]. In terms of biological role, NAD-dependent lysine deacetylase and desuccinylase that specifically removes acetyl and succinyl groups on target proteins. Modulates the activities of several proteins which are inactive in their acylated form. In Rhodopirellula baltica (strain DSM 10527 / NCIMB 13988 / SH1), this protein is NAD-dependent protein deacylase.